The following is a 375-amino-acid chain: Fluoride export protein 2 (375 aa).

The Cytoplasmic portion of the chain corresponds to 1-11; it reads MIFNPVISNHK. Residues 12-32 traverse the membrane as a helical segment; it reads LSHYIHVFCTFTTFCILGTET. The Extracellular segment spans residues 33-34; sequence RQ. The helical transmembrane segment at 35–55 threads the bilayer; that stretch reads AITALSTYTPAFVTAPTVLWS. At 56 to 79 the chain is on the cytoplasmic side; the sequence is NCSSCMLMGIMQSLNAYTWMKDHQ. A helical transmembrane segment spans residues 80–100; it reads VLFLGVTTGYCGALSSFSSML. The Extracellular segment spans residues 101–127; the sequence is LEMFEHSTNLTNGNIANHTKLPNRAYG. N-linked (GlcNAc...) asparagine glycosylation is found at asparagine 109 and asparagine 117. A helical membrane pass occupies residues 128–148; that stretch reads IMEFLSVLLVHLMVSMGSLIF. Topologically, residues 149 to 213 are cytoplasmic; it reads GRQLGKEVIV…FKKFFDVVDK (65 aa). Residues 214-234 form a helical membrane-spanning segment; sequence LAYALAFPLIILFVVLCAYYE. Asparagine 235 is a glycosylation site (N-linked (GlcNAc...) asparagine). Topologically, residues 235–241 are extracellular; that stretch reads NYSRGKW. The chain crosses the membrane as a helical span at residues 242-262; the sequence is TLPCLFGIFAGFLRYWLAEMF. The Cytoplasmic segment spans residues 263 to 268; that stretch reads NKTNKK. A helical membrane pass occupies residues 269–289; sequence FPLGTFLANVFATLLIGIFTM. Residues 290 to 310 lie on the Extracellular side of the membrane; it reads VQRGKKHFSTDIPIVNSLNSC. A helical membrane pass occupies residues 311–331; sequence HIVSALISGFCGTLSTISTFI. The Cytoplasmic portion of the chain corresponds to 332–338; sequence NEGYKLS. A helical membrane pass occupies residues 339-359; sequence FINMLIYYTVSIGISYCLLVI. Residues 360-375 are Extracellular-facing; the sequence is TLGSYAWTRGLTNPIC.

It belongs to the fluoride channel Fluc/FEX (TC 1.A.43) family.

It localises to the cell membrane. The catalysed reaction is fluoride(in) = fluoride(out). Fluoride channel required for the rapid expulsion of cytoplasmic fluoride. This Saccharomyces cerevisiae (strain ATCC 204508 / S288c) (Baker's yeast) protein is Fluoride export protein 2.